A 364-amino-acid polypeptide reads, in one-letter code: DNA polymerase IV (364 aa).

A UmuC domain is found at 14 to 198 (IIHIDMDAFF…LPIEKFHGVG (185 aa)). Asp-18 and Asp-116 together coordinate Mg(2+). Glu-117 is a catalytic residue.

This sequence belongs to the DNA polymerase type-Y family. Monomer. Mg(2+) is required as a cofactor.

Its subcellular location is the cytoplasm. It carries out the reaction DNA(n) + a 2'-deoxyribonucleoside 5'-triphosphate = DNA(n+1) + diphosphate. In terms of biological role, poorly processive, error-prone DNA polymerase involved in untargeted mutagenesis. Copies undamaged DNA at stalled replication forks, which arise in vivo from mismatched or misaligned primer ends. These misaligned primers can be extended by PolIV. Exhibits no 3'-5' exonuclease (proofreading) activity. May be involved in translesional synthesis, in conjunction with the beta clamp from PolIII. In Streptococcus pyogenes serotype M28 (strain MGAS6180), this protein is DNA polymerase IV.